The sequence spans 411 residues: Serine hydroxymethyltransferase (411 aa).

120 to 122 provides a ligand contact to (6S)-5,6,7,8-tetrahydrofolate; sequence GHL. Lys-225 bears the N6-(pyridoxal phosphate)lysine mark. (6S)-5,6,7,8-tetrahydrofolate is bound at residue 350-352; that stretch reads SPF.

It belongs to the SHMT family. In terms of assembly, homodimer. It depends on pyridoxal 5'-phosphate as a cofactor.

Its subcellular location is the cytoplasm. It catalyses the reaction (6R)-5,10-methylene-5,6,7,8-tetrahydrofolate + glycine + H2O = (6S)-5,6,7,8-tetrahydrofolate + L-serine. The protein operates within one-carbon metabolism; tetrahydrofolate interconversion. It participates in amino-acid biosynthesis; glycine biosynthesis; glycine from L-serine: step 1/1. In terms of biological role, catalyzes the reversible interconversion of serine and glycine with tetrahydrofolate (THF) serving as the one-carbon carrier. This reaction serves as the major source of one-carbon groups required for the biosynthesis of purines, thymidylate, methionine, and other important biomolecules. Also exhibits THF-independent aldolase activity toward beta-hydroxyamino acids, producing glycine and aldehydes, via a retro-aldol mechanism. The polypeptide is Serine hydroxymethyltransferase (Lactobacillus acidophilus (strain ATCC 700396 / NCK56 / N2 / NCFM)).